The chain runs to 561 residues: MPESKYRQQTIRAPRGTVLTAKSWLTEAPLRMLMNNLDPDVAENPHELVVYGGIGRAARNWECYDAIVDALTRLEADETLLIQSGKPVGVFKTHDNAPRVLIANSNLVPHWATWEHFNELDAKGLAMYGQMTAGSWIYIGSQGIVQGTYETFVEAGRQHYNGTLAGRWVLTAGLGGMGGAQPLAATLAGACSLTIECQQSRIDFRLRTRYVDEQAATLDDALARITRYTREGKAVSVALCANAADILPELVNRGVRPDLVTDQTSAHDPLHGYLPSGWRWEEYQKNAQSDPHGTMQAAKRSMAAHVRAMLAFSQMGVPTFDYGNNIRQMAKEMGVENAFDFPGFVPAYIRPLFCRGIGPFRWVALSGDPQDIYKTDAKVKEIVAEDKHLHHWLDMARERIHFQGLPARICWVGLEWRQKLGLAFNEMVRCGEVSAPIVIGRDHLDSGSVASPNRETEAMRDGSDAVSDWPLLNALLNTASGATWVSLHHGGGVGMGFSQHAGMVIVCDGTDEAAARIRRVLHNDPATGVMRHADAGYDLAVECAVEQGLNLPMVAATQGKG.

Residues 52–53, glutamine 130, 176–178, glutamate 196, arginine 201, 242–243, 263–267, 273–274, and tyrosine 322 contribute to the NAD(+) site; these read GG, GMG, NA, QTSAH, and YL. Cysteine 410 is an active-site residue. Glycine 492 lines the NAD(+) pocket.

This sequence belongs to the urocanase family. NAD(+) serves as cofactor.

Its subcellular location is the cytoplasm. It carries out the reaction 4-imidazolone-5-propanoate = trans-urocanate + H2O. The protein operates within amino-acid degradation; L-histidine degradation into L-glutamate; N-formimidoyl-L-glutamate from L-histidine: step 2/3. In terms of biological role, catalyzes the conversion of urocanate to 4-imidazolone-5-propionate. The protein is Urocanate hydratase of Salmonella agona (strain SL483).